Reading from the N-terminus, the 406-residue chain is DNA primase large subunit PriL (406 aa).

4 residues coordinate [4Fe-4S] cluster: Cys-302, Cys-375, Cys-384, and Cys-389.

The protein belongs to the eukaryotic-type primase large subunit family. As to quaternary structure, heterodimer of a small subunit (PriS) and a large subunit (PriL). [4Fe-4S] cluster serves as cofactor.

In terms of biological role, regulatory subunit of DNA primase, an RNA polymerase that catalyzes the synthesis of short RNA molecules used as primers for DNA polymerase during DNA replication. Stabilizes and modulates the activity of the small subunit, increasing the rate of DNA synthesis, and conferring RNA synthesis capability. The DNA polymerase activity may enable DNA primase to also catalyze primer extension after primer synthesis. May also play a role in DNA repair. The chain is DNA primase large subunit PriL from Methanopyrus kandleri (strain AV19 / DSM 6324 / JCM 9639 / NBRC 100938).